Consider the following 73-residue polypeptide: Translation initiation factor IF-1 (73 aa).

The S1-like domain occupies 1 to 72 (MSKKDVIELE…SRGRIVYRKK (72 aa)).

The protein belongs to the IF-1 family. In terms of assembly, component of the 30S ribosomal translation pre-initiation complex which assembles on the 30S ribosome in the order IF-2 and IF-3, IF-1 and N-formylmethionyl-tRNA(fMet); mRNA recruitment can occur at any time during PIC assembly.

The protein localises to the cytoplasm. Functionally, one of the essential components for the initiation of protein synthesis. Stabilizes the binding of IF-2 and IF-3 on the 30S subunit to which N-formylmethionyl-tRNA(fMet) subsequently binds. Helps modulate mRNA selection, yielding the 30S pre-initiation complex (PIC). Upon addition of the 50S ribosomal subunit IF-1, IF-2 and IF-3 are released leaving the mature 70S translation initiation complex. In Fusobacterium nucleatum subsp. nucleatum (strain ATCC 25586 / DSM 15643 / BCRC 10681 / CIP 101130 / JCM 8532 / KCTC 2640 / LMG 13131 / VPI 4355), this protein is Translation initiation factor IF-1.